We begin with the raw amino-acid sequence, 768 residues long: Pentatricopeptide repeat-containing protein At3g53360, mitochondrial (768 aa).

The N-terminal 70 residues, 1–70 (MATMLRLGAR…SSFKIRLRTY (70 aa)), are a transit peptide targeting the mitochondrion. PPR repeat units lie at residues 30–60 (TEEL…AQKN), 66–100 (RLRT…NCKY), 101–131 (DTIL…MPER), 132–166 (NLVS…DLVP), 167–201 (DQFA…ESSS), 202–232 (HLIA…IPMK), 233–267 (DLIS…GVFH), 269–303 (NEYI…ELAG), 304–334 (NAIA…IERP), 335–369 (DTAS…GFIP), 370–404 (DAIS…GFLA), 405–435 (DLTV…FRNN), 437–471 (DSVS…ECEP), 472–506 (DHIT…GLAP), 507–537 (EQFI…MDNR), 538–572 (DVVS…GIEP), 573–608 (NHVT…GISP), and 609–639 (TKEH…MKLE). Positions 644–719 (VWKTLLSACK…IPGQSWIEIE (76 aa)) are type E motif. A type E(+) motif region spans residues 720–750 (DKIHIFFAEDIFHPERDDIYTVLHNIWSQML).

This sequence belongs to the PPR family. PCMP-E subfamily.

The protein localises to the mitochondrion. The protein is Pentatricopeptide repeat-containing protein At3g53360, mitochondrial (PCMP-E86) of Arabidopsis thaliana (Mouse-ear cress).